We begin with the raw amino-acid sequence, 207 residues long: dTTP/UTP pyrophosphatase (207 aa).

Residue D86 is the Proton acceptor of the active site.

The protein belongs to the Maf family. YhdE subfamily. The cofactor is a divalent metal cation.

The protein localises to the cytoplasm. It carries out the reaction dTTP + H2O = dTMP + diphosphate + H(+). It catalyses the reaction UTP + H2O = UMP + diphosphate + H(+). In terms of biological role, nucleoside triphosphate pyrophosphatase that hydrolyzes dTTP and UTP. May have a dual role in cell division arrest and in preventing the incorporation of modified nucleotides into cellular nucleic acids. This is dTTP/UTP pyrophosphatase from Nitrosospira multiformis (strain ATCC 25196 / NCIMB 11849 / C 71).